The primary structure comprises 430 residues: Probable carboxypeptidase AO090003000058 (430 aa).

A signal peptide spans 1 to 16 (MKSIYSLVLCTALTAA). Residue Asn84 is glycosylated (N-linked (GlcNAc...) asparagine). Residue Asp156 participates in Zn(2+) binding. Residue Glu188 is the Proton acceptor of the active site. Residue Glu189 coordinates Zn(2+). N-linked (GlcNAc...) asparagine glycosylation occurs at Asn285.

The protein belongs to the peptidase M20A family. It depends on Zn(2+) as a cofactor.

It localises to the secreted. In Aspergillus oryzae (strain ATCC 42149 / RIB 40) (Yellow koji mold), this protein is Probable carboxypeptidase AO090003000058.